A 527-amino-acid chain; its full sequence is Cytochrome b5 reductase 4 (527 aa).

Positions 1–24 are disordered; sequence MLNVPSQAFPAAGSQQRVAPAGQS. The region spanning 56 to 132 is the Cytochrome b5 heme-binding domain; sequence LIEVTEDELK…LKECLVGRMA (77 aa). Residues His91 and His114 each coordinate heme. The disordered stretch occupies residues 138–171; it reads ALQAHTEKTESTHLNGLSAPPSLRPEPLSAPLPA. Residues 173–264 enclose the CS domain; the sequence is DHRPRYDWFQ…SVKEKWTQLG (92 aa). The 112-residue stretch at 281–392 folds into the FAD-binding FR-type domain; sequence LFYRECVLLS…GGPEGSFTLR (112 aa). FAD-binding positions include 372-387 and 399-431; these read ANLPIGASLSVGGPEG and HLYMLAAGTGFTPMARLIRLALQDFTVIRKMKL.

It belongs to the flavoprotein pyridine nucleotide cytochrome reductase family. It depends on FAD as a cofactor.

The protein localises to the endoplasmic reticulum. It carries out the reaction 2 Fe(III)-[cytochrome b5] + NADH = 2 Fe(II)-[cytochrome b5] + NAD(+) + H(+). Functionally, NADH-cytochrome b5 reductase involved in endoplasmic reticulum stress response pathway. This chain is Cytochrome b5 reductase 4 (cyb5r4), found in Danio rerio (Zebrafish).